Consider the following 296-residue polypeptide: Putative ankyrin repeat protein FPV216 (296 aa).

ANK repeat units follow at residues Ser73 to Thr102 and Leu107 to Ile136.

The sequence is that of Putative ankyrin repeat protein FPV216 from Fowlpox virus (strain NVSL) (FPV).